The chain runs to 271 residues: MQSNKVHMGHTARKRFGQNFLHDRYVIDQIVAAINPQPGQNLVEIGPGLAALTEPVASQMDKMTVVELDRDLAARLREHPTLKEKLTVIEADAMRFDFGTLMGEGKGPLRIFGNLPYNISTPLIFHLCEFADRVEDMHFMLQKEVVLRLAAGPGSKAYGRLSVMTQYYCQVVPVLEVGPGAFKPAPKVDSAVVRLIPHKNPTIVAKDIRCLNRVCTEGFGQRRKTIRNSFSNFITDAQLTELGIDGNLRPENLSLEQFVMIANWLADQQQA.

Residues Asn19, Leu21, Gly46, Glu67, Asp92, and Asn114 each contribute to the S-adenosyl-L-methionine site.

Belongs to the class I-like SAM-binding methyltransferase superfamily. rRNA adenine N(6)-methyltransferase family. RsmA subfamily.

Its subcellular location is the cytoplasm. It catalyses the reaction adenosine(1518)/adenosine(1519) in 16S rRNA + 4 S-adenosyl-L-methionine = N(6)-dimethyladenosine(1518)/N(6)-dimethyladenosine(1519) in 16S rRNA + 4 S-adenosyl-L-homocysteine + 4 H(+). Specifically dimethylates two adjacent adenosines (A1518 and A1519) in the loop of a conserved hairpin near the 3'-end of 16S rRNA in the 30S particle. May play a critical role in biogenesis of 30S subunits. The sequence is that of Ribosomal RNA small subunit methyltransferase A from Aeromonas hydrophila subsp. hydrophila (strain ATCC 7966 / DSM 30187 / BCRC 13018 / CCUG 14551 / JCM 1027 / KCTC 2358 / NCIMB 9240 / NCTC 8049).